The following is a 95-amino-acid chain: Ascorbate-specific PTS system EIIB component (95 aa).

The PTS EIIB type-2 domain maps to 1-95 (MENKNLHIIA…EIKQALSKVL (95 aa)). The active-site Phosphocysteine intermediate is C12. At C12 the chain carries Phosphocysteine.

The protein localises to the cytoplasm. The catalysed reaction is N(pros)-phospho-L-histidyl-[protein] + L-ascorbate(out) = L-ascorbate 6-phosphate(in) + L-histidyl-[protein]. Its function is as follows. The phosphoenolpyruvate-dependent sugar phosphotransferase system (sugar PTS), a major carbohydrate active transport system, catalyzes the phosphorylation of incoming sugar substrates concomitantly with their translocation across the cell membrane. The enzyme II UlaABC PTS system is involved in ascorbate transport. The polypeptide is Ascorbate-specific PTS system EIIB component (ulaB) (Mycoplasma pneumoniae (strain ATCC 29342 / M129 / Subtype 1) (Mycoplasmoides pneumoniae)).